The following is a 257-amino-acid chain: UPF0246 protein Ping_3037 (257 aa).

The protein belongs to the UPF0246 family.

This Psychromonas ingrahamii (strain DSM 17664 / CCUG 51855 / 37) protein is UPF0246 protein Ping_3037.